A 197-amino-acid chain; its full sequence is Transposon Tn552 resolvase (197 aa).

One can recognise a Resolvase/invertase-type recombinase catalytic domain in the interval 1 to 136 (MKIGYARVST…AGRIAARARG (136 aa)). S9 acts as the O-(5'-phospho-DNA)-serine intermediate in catalysis. Positions 163-182 (IKTIAEQWQVSRTTIYRYLN) form a DNA-binding region, H-T-H motif.

Belongs to the site-specific recombinase resolvase family.

Its function is as follows. Resolvase catalyzes the resolution (a site-specific recombination) of the cointegrated replicon to yield the final transposition products. The chain is Transposon Tn552 resolvase (tnpR) from Staphylococcus aureus.